Reading from the N-terminus, the 472-residue chain is PEP-dependent dihydroxyacetone kinase, phosphoryl donor subunit DhaM (472 aa).

Residues 1-135 enclose the PTS EIIA type-4 domain; that stretch reads MVNLVIVSHS…HALEAKREQL (135 aa). Residue His9 is the Tele-phosphohistidine intermediate of the active site. Positions 155–242 constitute an HPr domain; the sequence is ARSLAVVIKN…QLAEDNFGET (88 aa). The active-site Pros-phosphohistidine intermediate is His169. The PTS EI-like, N-terminal part stretch occupies residues 264–472; that stretch reads QPVLCTVQAK…VKTQRFNRQG (209 aa). Catalysis depends on His430, which acts as the Tele-phosphohistidine intermediate.

Belongs to the PEP-utilizing enzyme family. As to quaternary structure, homodimer. The dihydroxyacetone kinase complex is composed of a homodimer of DhaM, a homodimer of DhaK and the subunit DhaL.

It catalyses the reaction dihydroxyacetone + phosphoenolpyruvate = dihydroxyacetone phosphate + pyruvate. It participates in polyol metabolism; glycerol degradation. Functionally, component of the dihydroxyacetone kinase complex, which is responsible for the phosphoenolpyruvate (PEP)-dependent phosphorylation of dihydroxyacetone. DhaM serves as the phosphoryl donor. Is phosphorylated by phosphoenolpyruvate in an EI- and HPr-dependent reaction, and a phosphorelay system on histidine residues finally leads to phosphoryl transfer to DhaL and dihydroxyacetone. This is PEP-dependent dihydroxyacetone kinase, phosphoryl donor subunit DhaM from Escherichia coli (strain K12).